The chain runs to 337 residues: Glyceraldehyde-3-phosphate dehydrogenase (337 aa).

NAD(+)-binding positions include 17-18 (RI), D39, K83, and S125. Residues 156 to 158 (SCT), T187, R202, 215 to 216 (TG), and R238 each bind D-glyceraldehyde 3-phosphate. Catalysis depends on C157, which acts as the Nucleophile. Position 319 (N319) interacts with NAD(+).

It belongs to the glyceraldehyde-3-phosphate dehydrogenase family. Homotetramer.

It localises to the cytoplasm. It carries out the reaction D-glyceraldehyde 3-phosphate + phosphate + NAD(+) = (2R)-3-phospho-glyceroyl phosphate + NADH + H(+). It participates in carbohydrate degradation; glycolysis; pyruvate from D-glyceraldehyde 3-phosphate: step 1/5. In terms of biological role, catalyzes the oxidative phosphorylation of glyceraldehyde 3-phosphate (G3P) to 1,3-bisphosphoglycerate (BPG) using the cofactor NAD. The first reaction step involves the formation of a hemiacetal intermediate between G3P and a cysteine residue, and this hemiacetal intermediate is then oxidized to a thioester, with concomitant reduction of NAD to NADH. The reduced NADH is then exchanged with the second NAD, and the thioester is attacked by a nucleophilic inorganic phosphate to produce BPG. This is Glyceraldehyde-3-phosphate dehydrogenase (gapA) from Mycoplasma genitalium (strain ATCC 33530 / DSM 19775 / NCTC 10195 / G37) (Mycoplasmoides genitalium).